The chain runs to 520 residues: Ribonuclease Y (520 aa).

Residues 1-21 (MDIITIIIAVIAGIGGGFGIS) traverse the membrane as a helical segment. The region spanning 210–276 (CVSVFNIESD…RLALHKLVTD (67 aa)) is the KH domain. The 94-residue stretch at 336 to 429 (LLQHSREVSK…VQVCDAISGA (94 aa)) folds into the HD domain.

This sequence belongs to the RNase Y family.

The protein localises to the cell membrane. In terms of biological role, endoribonuclease that initiates mRNA decay. The polypeptide is Ribonuclease Y (Flavobacterium psychrophilum (strain ATCC 49511 / DSM 21280 / CIP 103535 / JIP02/86)).